The chain runs to 311 residues: MSKILVFGHQNPDSDAIGSSYAFAYLAREAYGLDTEAVALGEPNEETAFVLDYFGVAAPRVITSAKAEGAEQVILTDHNEFQQSVADIAEVEVYGVVDHHRVANFETANPLYMRLEPVGSASSIVYRMFKEHSVAVSKEIAGLMLSGLISDTLLLKSPTTHPTDKAIAPELAELAGVNLEEYGLAMLKAGTNLASKSAEELIDIDAKTFELNGNNVRVAQVNTVDIAEVLERQAEIEAAIEKAIADNGYSDFVLMITDIINSNSEILAIGSNMDKVEAAFNFVLENNHAFLAGAVSRKKQVVPQLTESFNA.

Mn(2+) is bound by residues His-9, Asp-13, Asp-15, Asp-77, His-99, and Asp-151.

Belongs to the PPase class C family. Homodimer. Requires Mn(2+) as cofactor.

Its subcellular location is the cytoplasm. It catalyses the reaction diphosphate + H2O = 2 phosphate + H(+). The chain is Probable manganese-dependent inorganic pyrophosphatase (ppaC) from Streptococcus gordonii (strain Challis / ATCC 35105 / BCRC 15272 / CH1 / DL1 / V288).